The primary structure comprises 561 residues: Shugoshin 1 (561 aa).

The necessary for interaction with PPP2CA and PPP2R1A stretch occupies residues 1–176 (MAKERCLKKS…DTLGVDFDSG (176 aa)). Residues 7–89 (LKKSFQDSLE…DIILQLRKEC (83 aa)) adopt a coiled-coil conformation. The residue at position 14 (serine 14) is a Phosphoserine; by NEK2. A D-box 1 motif is present at residues 192–200 (RSSLKKHCN). Serine 256 carries the post-translational modification Phosphoserine. Disordered stretches follow at residues 260 to 331 (IQPG…SVSS) and 348 to 441 (FRQK…HLSL). Residues 267–296 (KTKEDILESKSEQTKSKQRDTQERKREEKR) are compositionally biased toward basic and acidic residues. A coiled-coil region spans residues 273–313 (LESKSEQTKSKQRDTQERKREEKRKANRRKSKRMSKYKENK). Over residues 297 to 307 (KANRRKSKRMS) the composition is skewed to basic residues. Positions 308 to 318 (KYKENKSENKK) are enriched in basic and acidic residues. A KEN box motif is present at residues 310-312 (KEN). The segment covering 364–375 (SEVSLCESSGSG) has biased composition (low complexity). Polar residues predominate over residues 388–398 (YIQNPTSNSDR). Residues 410–421 (KYTDEKETEGSK) show a composition bias toward basic and acidic residues. Residues 422-433 (PTKTPTTTPPET) show a composition bias toward low complexity. Position 436 is a phosphoserine (serine 436). The D-box 2 signature appears at 438–446 (HLSLKDITN). A PXVXL/I motif motif is present at residues 451 to 455 (PVVKI). The short motif at 457 to 465 (RLSLSPKKN) is the D-box 3 element. Serine 507 carries the phosphoserine; by NEK2 modification.

It belongs to the shugoshin family. Interacts with PPP2CA (or PPP2CB), PPP2R1B, PPP2R5A, PPP2R5B, PPP2R5C, PPP2R5D, PPP2R5E, SET, LRRC59, RBM10 (or RBM5), RPL10A, RPL28, RPL7, RPL7A and RPLP1. Interaction with protein phosphatase 2A occurs most probably through direct binding to the regulatory B56 subunits: PPP2R1B, PPP2R5A, PPP2R5B, PPP2R5C, PPP2R5D, PPP2R5E. Interacts with PPP2R1A and NEK2. Isoform 3 interacts with PLK1. Interacts with CDCA8. In terms of processing, ubiquitinated and degraded during mitotic exit by APC/C-Cdh1. Phosphorylation by NEK2 is essential for chromosome congression in mitosis and for the proper attachment of spindle microtubule to the kinetochore. Phosphorylated by PLK1 and AUKRB. Widely expressed. Highly expressed in testis. Expressed in lung, small intestine, breast, liver and placenta. Strongly overexpressed in 90% of breast cancers tested.

It is found in the nucleus. It localises to the chromosome. The protein localises to the centromere. Its subcellular location is the kinetochore. The protein resides in the cytoplasm. It is found in the cytoskeleton. It localises to the spindle pole. The protein localises to the microtubule organizing center. Its subcellular location is the centrosome. The protein resides in the nucleus speckle. In terms of biological role, plays a central role in chromosome cohesion during mitosis by preventing premature dissociation of cohesin complex from centromeres after prophase, when most of cohesin complex dissociates from chromosomes arms. May act by preventing phosphorylation of the STAG2 subunit of cohesin complex at the centromere, ensuring cohesin persistence at centromere until cohesin cleavage by ESPL1/separase at anaphase. Essential for proper chromosome segregation during mitosis and this function requires interaction with PPP2R1A. Its phosphorylated form is necessary for chromosome congression and for the proper attachment of spindle microtubule to the kinetochore. Necessary for kinetochore localization of PLK1 and CENPF. May play a role in the tension sensing mechanism of the spindle-assembly checkpoint by regulating PLK1 kinetochore affinity. Isoform 3 plays a role in maintaining centriole cohesion involved in controlling spindle pole integrity. Involved in centromeric enrichment of AUKRB in prometaphase. In Homo sapiens (Human), this protein is Shugoshin 1.